The chain runs to 327 residues: Ran-specific GTPase-activating protein 2 (327 aa).

Disordered stretches follow at residues 1–96 and 109–205; these read MSET…KKED and GFGV…KQEV. The span at 24–83 shows a compositional bias: basic and acidic residues; that stretch reads PIDKLDGTPKRPREKDQDEQAEETSDKSEAPNKNDEEKKEEGKKDQEPSHKKIKVDDGKT. Thr31 is subject to Phosphothreonine. Residues 122–133 show a composition bias toward polar residues; the sequence is ATTSTESLPASD. Residues 140 to 152 are compositionally biased toward low complexity; the sequence is FAFGSGLSFGSGF. Composition is skewed to basic and acidic residues over residues 157-179 and 189-205; these read NKTENNSESEKKATDVDKDKVHS and EDTKDKPKPLKLQKQEV. Phosphoserine is present on Ser179. Positions 191–327 constitute a RanBD1 domain; sequence TKDKPKPLKL…YNIIVKSVPK (137 aa).

Interacts with GSP1, XPO1 and SRM1.

Its subcellular location is the nucleus. Its function is as follows. Important for the export of protein containing nuclear export signal (NES) out of the nucleus. Stimulates the GTPase activity of GSP1. In Saccharomyces cerevisiae (strain ATCC 204508 / S288c) (Baker's yeast), this protein is Ran-specific GTPase-activating protein 2 (YRB2).